The chain runs to 489 residues: Cysteine--tRNA ligase (489 aa).

Position 27 (Cys-27) interacts with Zn(2+). The 'HIGH' region signature appears at 29–39 (VTVYDLCHLGH). Zn(2+) contacts are provided by Cys-211, His-236, and Glu-240. The 'KMSKS' region motif lies at 268-272 (KMSKS). Lys-271 is an ATP binding site.

Belongs to the class-I aminoacyl-tRNA synthetase family. Monomer. Zn(2+) is required as a cofactor.

The protein resides in the cytoplasm. The catalysed reaction is tRNA(Cys) + L-cysteine + ATP = L-cysteinyl-tRNA(Cys) + AMP + diphosphate. The protein is Cysteine--tRNA ligase of Prochlorococcus marinus (strain AS9601).